We begin with the raw amino-acid sequence, 205 residues long: Meiotic nuclear division protein 1 homolog (205 aa).

Residue S2 is modified to N-acetylserine. Residues 83 to 173 (KRKLEVLDSQ…EAANRWTDNI (91 aa)) are a coiled coil.

This sequence belongs to the MND1 family. As to quaternary structure, heterodimer with PSMC3IP/HOP2. MND1-PSMC3IP interacts with DMC1 and RAD51 and binds preferentially to dsDNA.

It is found in the nucleus. Required for proper homologous chromosome pairing and efficient cross-over and intragenic recombination during meiosis. Stimulates both DMC1- and RAD51-mediated homologous strand assimilation, which is required for the resolution of meiotic double-strand breaks. The chain is Meiotic nuclear division protein 1 homolog from Bos taurus (Bovine).